A 706-amino-acid polypeptide reads, in one-letter code: Polyribonucleotide nucleotidyltransferase (706 aa).

Residues aspartate 488 and aspartate 494 each contribute to the Mg(2+) site. The region spanning 555–614 (PRLFTMKINPDKIRDVIGKGGSVIRALTEETGTQINIDEDGTITIASADPAKAEEAKRRI) is the KH domain. The 69-residue stretch at 624–692 (GKIYEGPITK…EKGRIKLSMK (69 aa)) folds into the S1 motif domain.

It belongs to the polyribonucleotide nucleotidyltransferase family. Requires Mg(2+) as cofactor.

It is found in the cytoplasm. It carries out the reaction RNA(n+1) + phosphate = RNA(n) + a ribonucleoside 5'-diphosphate. Its function is as follows. Involved in mRNA degradation. Catalyzes the phosphorolysis of single-stranded polyribonucleotides processively in the 3'- to 5'-direction. The chain is Polyribonucleotide nucleotidyltransferase from Albidiferax ferrireducens (strain ATCC BAA-621 / DSM 15236 / T118) (Rhodoferax ferrireducens).